The following is a 248-amino-acid chain: Triosephosphate isomerase (248 aa).

N10 and K12 together coordinate substrate. H95 (electrophile) is an active-site residue. Residue E165 is the Proton acceptor of the active site.

Belongs to the triosephosphate isomerase family. In terms of assembly, homodimer.

The catalysed reaction is D-glyceraldehyde 3-phosphate = dihydroxyacetone phosphate. Its pathway is carbohydrate biosynthesis; gluconeogenesis. It functions in the pathway carbohydrate degradation; glycolysis; D-glyceraldehyde 3-phosphate from glycerone phosphate: step 1/1. The chain is Triosephosphate isomerase (TPI1) from Kluyveromyces lactis (strain ATCC 8585 / CBS 2359 / DSM 70799 / NBRC 1267 / NRRL Y-1140 / WM37) (Yeast).